Here is a 101-residue protein sequence, read N- to C-terminus: Small ribosomal subunit protein bS6 (101 aa).

It belongs to the bacterial ribosomal protein bS6 family.

Binds together with bS18 to 16S ribosomal RNA. This is Small ribosomal subunit protein bS6 from Nitratidesulfovibrio vulgaris (strain DSM 19637 / Miyazaki F) (Desulfovibrio vulgaris).